Consider the following 304-residue polypeptide: Acetylglutamate kinase (304 aa).

Residues 82–83 (GG), Arg-104, and Asn-197 contribute to the substrate site.

The protein belongs to the acetylglutamate kinase family. ArgB subfamily.

The protein resides in the cytoplasm. The enzyme catalyses N-acetyl-L-glutamate + ATP = N-acetyl-L-glutamyl 5-phosphate + ADP. It functions in the pathway amino-acid biosynthesis; L-arginine biosynthesis; N(2)-acetyl-L-ornithine from L-glutamate: step 2/4. In terms of biological role, catalyzes the ATP-dependent phosphorylation of N-acetyl-L-glutamate. This Prochlorococcus marinus (strain SARG / CCMP1375 / SS120) protein is Acetylglutamate kinase.